We begin with the raw amino-acid sequence, 2839 residues long: Bifunctional DNA-directed RNA polymerase subunit beta-beta' (2839 aa).

The DNA-directed RNA polymerase subunit beta stretch occupies residues 1–1433 (MVDSSYMCAS…CLNVALKQNN (1433 aa)). Residues 1436-2839 (IEDISHTNIA…KESVAESRYN (1404 aa)) form a DNA-directed RNA polymerase subunit beta' region. 4 residues coordinate Zn(2+): Cys1501, Cys1503, Cys1516, and Cys1519. Residues Asp1893, Asp1895, and Asp1897 each coordinate Mg(2+). Cys2238, Cys2312, Cys2319, and Cys2322 together coordinate Zn(2+).

This sequence in the N-terminal section; belongs to the RNA polymerase beta chain family. It in the C-terminal section; belongs to the RNA polymerase beta' chain family. In terms of assembly, the RNAP catalytic core consists of 2 alpha, 1 beta/beta' and 1 omega subunit. When a sigma factor is associated with the core the holoenzyme is formed, which can initiate transcription. Mg(2+) serves as cofactor. The cofactor is Zn(2+).

It carries out the reaction RNA(n) + a ribonucleoside 5'-triphosphate = RNA(n+1) + diphosphate. DNA-dependent RNA polymerase catalyzes the transcription of DNA into RNA using the four ribonucleoside triphosphates as substrates. The protein is Bifunctional DNA-directed RNA polymerase subunit beta-beta' (rpoBC) of Wolbachia sp. subsp. Brugia malayi (strain TRS).